The following is a 130-amino-acid chain: Early 3 receptor internalization and degradation beta protein (130 aa).

The N-terminal stretch at 1-19 (MKRSVIFVLLIFCALPVLC) is a signal peptide. A helical transmembrane segment spans residues 53–77 (AWLYAIISVMVFCSTIFALAIYPYL). Residues 122 to 125 (YFNL) are tyrosine-based sorting motif.

Belongs to the adenoviridae E3_RID-beta family. Interacts with E3 RID-alpha and E3 CR1-alpha. In terms of processing, phosphorylated on serine. O-glycosylated, but not N-glycosylated.

It localises to the host membrane. Prevents infected cell apoptosis induced by the host immune system. Acts by down-regulating a number of cell surface receptors in the tumor necrosis factor (TNF) receptor superfamily, namely FAS, TNFRSF10A/TRAIL receptor 1, and TNFRSF10B/TRAIL receptor 2. Down-regulation of these death receptors protects adenovirus-infected cells from apoptosis induced by the death receptor ligands Fas ligand and TRAIL. RID complex also down-regulates certain tyrosine kinase cell surface receptors, especially the epidermal growth factor receptor (EGFR). RID-mediated Fas and EGFR down-regulation occurs via endocytosis of the receptors into endosomes followed by transport to and degradation within lysosomes. In Human adenovirus C serotype 2 (HAdV-2), this protein is Early 3 receptor internalization and degradation beta protein.